A 246-amino-acid chain; its full sequence is MAVRAQFENSNEVGVFSTLTNSYALVAVGASENFYSVFEAELQDVIPICRTTIAGTRIIGRLTAGNRKGLLVPTTTSDQELQHLRNSLPDDVRIQRIEERLSALGNVIVCNDHTALIHPDLERETEEIIADVLGVEVFRQTIADNVLVGSYMALSNQGGLVHPKTSIQDQDELSSLLQVPLVAGSVNRGSNVIGGGMVVNDWMAVTGLDTTAPELSVIESVFRLGEGAAPGQINSSLKDTMVESFY.

Phosphoserine; by CK1 is present on residues S174 and S175.

The protein belongs to the eIF-6 family. In terms of assembly, monomer. Associates with the 60S ribosomal subunit. Phosphorylation at Ser-174 and Ser-175 promotes nuclear export.

Its subcellular location is the cytoplasm. The protein localises to the nucleus. The protein resides in the nucleolus. In terms of biological role, binds to the 60S ribosomal subunit and prevents its association with the 40S ribosomal subunit to form the 80S initiation complex in the cytoplasm. Is also involved in ribosome biogenesis. Associates with pre-60S subunits in the nucleus and is involved in its nuclear export. The sequence is that of Eukaryotic translation initiation factor 6 (tif-6) from Neurospora crassa (strain ATCC 24698 / 74-OR23-1A / CBS 708.71 / DSM 1257 / FGSC 987).